We begin with the raw amino-acid sequence, 1432 residues long: Gag-Pol polyprotein (1432 aa).

CCHC-type zinc fingers lie at residues 368 to 385 and 386 to 403; these read QRCY…DCKN and QKCF…NCKS. In terms of domain architecture, Peptidase A2 spans 452-525; the sequence is VRALIDTGAD…TPVNLLGRSV (74 aa). The For protease activity; shared with dimeric partner role is filled by Asp-457. A Reverse transcriptase domain is found at 579–766; that stretch reads DGKISRTPWD…EQVQWLGYEL (188 aa). The Mg(2+) site is built by Asp-645, Asp-720, and Asp-721. A coiled-coil region spans residues 815–843; the sequence is KGKTDLKDKIKLTEEAIQCLETVNKRLKD. The region spanning 959–1079 is the RNase H type-1 domain; the sequence is IERYPTYYTD…VDQEVQKALQ (121 aa). Residues Asp-968, Glu-999, Asp-1019, and Asp-1071 each contribute to the Mg(2+) site. The segment at 1157–1198 adopts an Integrase-type zinc-finger fold; that stretch reads EAIPQAIEEHEKWHTTAEILAREFQLPRRVAREIVHRCQACK. His-1166, His-1170, Cys-1194, and Cys-1197 together coordinate Zn(2+). One can recognise an Integrase catalytic domain in the interval 1206 to 1358; the sequence is RGTNPRERFL…TPYEIYLESE (153 aa). Mg(2+) is bound by residues Asp-1219 and Asp-1271. Positions 1376–1422 form a DNA-binding region, integrase-type; sequence KWAYVRDKRKVWKGPYKVLWDGEGAAVVEENAMPTLYPHRHMRFIPP.

Post-translationally, specific enzymatic cleavages by the viral protease yield mature proteins. The protease is released by autocatalytic cleavage. The polyprotein is cleaved during and after budding, this process is termed maturation.

It localises to the virion. The enzyme catalyses DNA(n) + a 2'-deoxyribonucleoside 5'-triphosphate = DNA(n+1) + diphosphate. It catalyses the reaction Endohydrolysis of RNA in RNA/DNA hybrids. Three different cleavage modes: 1. sequence-specific internal cleavage of RNA. Human immunodeficiency virus type 1 and Moloney murine leukemia virus enzymes prefer to cleave the RNA strand one nucleotide away from the RNA-DNA junction. 2. RNA 5'-end directed cleavage 13-19 nucleotides from the RNA end. 3. DNA 3'-end directed cleavage 15-20 nucleotides away from the primer terminus.. It carries out the reaction 3'-end directed exonucleolytic cleavage of viral RNA-DNA hybrid.. In terms of biological role, matrix protein p16 forms the outer shell of the core of the virus, lining the inner surface of the viral membrane. Its function is as follows. Capsid protein p26 forms the conical core of the virus that encapsulates the genomic RNA-nucleocapsid complex. The aspartyl protease mediates proteolytic cleavages of Gag and Gag-Pol polyproteins during or shortly after the release of the virion from the plasma membrane. Cleavages take place as an ordered, step-wise cascade to yield mature proteins. This process is called maturation. Displays maximal activity during the budding process just prior to particle release from the cell. Functionally, reverse transcriptase/ribonuclease H (RT) is a multifunctional enzyme that converts the viral RNA genome into dsDNA in the cytoplasm, shortly after virus entry into the cell. This enzyme displays a DNA polymerase activity that can copy either DNA or RNA templates, and a ribonuclease H (RNase H) activity that cleaves the RNA strand of RNA-DNA heteroduplexes in a partially processive 3' to 5' endonucleasic mode. Conversion of viral genomic RNA into dsDNA requires many steps. A tRNA binds to the primer-binding site (PBS) situated at the 5'-end of the viral RNA. RT uses the 3' end of the tRNA primer to perform a short round of RNA-dependent minus-strand DNA synthesis. The reading proceeds through the U5 region and ends after the repeated (R) region which is present at both ends of viral RNA. The portion of the RNA-DNA heteroduplex is digested by the RNase H, resulting in a ssDNA product attached to the tRNA primer. This ssDNA/tRNA hybridizes with the identical R region situated at the 3' end of viral RNA. This template exchange, known as minus-strand DNA strong stop transfer, can be either intra- or intermolecular. RT uses the 3' end of this newly synthesized short ssDNA to perform the RNA-dependent minus-strand DNA synthesis of the whole template. RNase H digests the RNA template except for a polypurine tract (PPT) situated at the 5'-end of the genome. It is not clear if both polymerase and RNase H activities are simultaneous. RNase H probably can proceed both in a polymerase-dependent (RNA cut into small fragments by the same RT performing DNA synthesis) and a polymerase-independent mode (cleavage of remaining RNA fragments by free RTs). Secondly, RT performs DNA-directed plus-strand DNA synthesis using the PPT that has not been removed by RNase H as primer. PPT and tRNA primers are then removed by RNase H. The 3' and 5' ssDNA PBS regions hybridize to form a circular dsDNA intermediate. Strand displacement synthesis by RT to the PBS and PPT ends produces a blunt ended, linear dsDNA copy of the viral genome that includes long terminal repeats (LTRs) at both ends. In terms of biological role, integrase catalyzes viral DNA integration into the host chromosome, by performing a series of DNA cutting and joining reactions. This enzyme activity takes place after virion entry into a cell and reverse transcription of the RNA genome in dsDNA. The polypeptide is Gag-Pol polyprotein (gag-pol) (Jembrana disease virus (JDV)).